An 883-amino-acid polypeptide reads, in one-letter code: Translation initiation factor IF-2 (883 aa).

The disordered stretch occupies residues 118 to 261 (VARESEAAPA…KKKEAFKKTE (144 aa)). Residues 124 to 150 (AAPAEEPVAAAVKPASEPPVVQKAPVA) show a composition bias toward low complexity. Composition is skewed to basic and acidic residues over residues 183–200 (PADRREATAPKKRIEERI) and 252–261 (KKKEAFKKTE). The region spanning 383–552 (KRPPVVTIMG…LLQADVMDLK (170 aa)) is the tr-type G domain. Residues 392 to 399 (GHVDHGKT) are G1. GTP is bound at residue 392–399 (GHVDHGKT). The G2 stretch occupies residues 417-421 (GITQH). The G3 stretch occupies residues 438 to 441 (DTPG). GTP is bound by residues 438–442 (DTPGH) and 492–495 (NKID). A G4 region spans residues 492–495 (NKID). A G5 region spans residues 528–530 (SAK).

It belongs to the TRAFAC class translation factor GTPase superfamily. Classic translation factor GTPase family. IF-2 subfamily.

The protein localises to the cytoplasm. Its function is as follows. One of the essential components for the initiation of protein synthesis. Protects formylmethionyl-tRNA from spontaneous hydrolysis and promotes its binding to the 30S ribosomal subunits. Also involved in the hydrolysis of GTP during the formation of the 70S ribosomal complex. The polypeptide is Translation initiation factor IF-2 (Geobacter sulfurreducens (strain ATCC 51573 / DSM 12127 / PCA)).